Reading from the N-terminus, the 46-residue chain is MSYVCLICGAEVDIDTEKSLVQCTNCGGRILIKPRPLAKKKRVKAI.

Residues cysteine 8, cysteine 23, and cysteine 26 each contribute to the Zn(2+) site.

Belongs to the archaeal Rpo12/eukaryotic RPC10 RNA polymerase subunit family. As to quaternary structure, part of the RNA polymerase complex. Requires Zn(2+) as cofactor.

It is found in the cytoplasm. It carries out the reaction RNA(n) + a ribonucleoside 5'-triphosphate = RNA(n+1) + diphosphate. Functionally, DNA-dependent RNA polymerase (RNAP) catalyzes the transcription of DNA into RNA using the four ribonucleoside triphosphates as substrates. The chain is DNA-directed RNA polymerase subunit Rpo12 from Archaeoglobus fulgidus (strain ATCC 49558 / DSM 4304 / JCM 9628 / NBRC 100126 / VC-16).